The following is a 153-amino-acid chain: MSGKPQSPENQARQLIVAYQQYQAEAESLVRELGLIQMTAEGLDKAISAIGALSKAAEGQEMLVPIGSGSFAYAKLSSADRVVVNVGGGVSIEKPAEEAMEMLRARRSAISESSKKINEALAKIEQEMARIQAALERLERELQKQGGSEGFVQ.

Belongs to the prefoldin subunit alpha family. In terms of assembly, heterohexamer of two alpha and four beta subunits.

It is found in the cytoplasm. Its function is as follows. Molecular chaperone capable of stabilizing a range of proteins. Seems to fulfill an ATP-independent, HSP70-like function in archaeal de novo protein folding. The polypeptide is Prefoldin subunit alpha (Methanothrix thermoacetophila (strain DSM 6194 / JCM 14653 / NBRC 101360 / PT) (Methanosaeta thermophila)).